Here is a 574-residue protein sequence, read N- to C-terminus: MKPINNHSFFRSLCGLSCISRLSVEEQCTRDYHRIWDDWAREGTTTENRIQAVRLLKICLDTREPVLNLSLLKLRSLPPLPLHIRELNISNNELISLPENSPLLTELHVNGNNLNILPTLPSQLIKLNISFNRNLSCLPSLPPYLQSLSARFNSLETLPELPSTLTILRIEGNRLTVLPELPHRLQELFVSGNRLQELPEFPQSLKYLKVGENQLRRLSRLPQELLALDVSNNLLTSLPENIITLPICTNVNISGNPLSTHVLQSLQRLTSSPDYHGPQIYFSMSDGQQNTLHRPLADAVTAWFPENKQSDVSQIWHAFEHEEHANTFSAFLDRLSDTVSARNTSGFREQVAAWLEKLSASAELRQQSFAVAADATESCEDRVALTWNNLRKTLLVHQASEGLFDNDTGALLSLGREMFRLEILEDIARDKVRTLHFVDEIEVYLAFQTMLAEKLQLSTAVKEMRFYGVSGVTANDLRTAEAMVRSREENEFTDWFSLWGPWHAVLKRTEADRWAQAEEQKYEMLENEYSQRVADRLKASGLSGDADAEREAGAQVMRETEQQIYRQLTDEVLA.

The tract at residues 1–284 is interaction with target proteins; sequence MKPINNHSFF…YHGPQIYFSM (284 aa). LRR repeat units lie at residues 63–82, 83–104, 105–122, 123–143, 144–165, 166–183, 184–205, 206–223, 224–246, and 247–270; these read REPV…PLPL, HIRE…SPLL, TELH…TLPS, QLIK…SLPP, YLQS…PSTL, TILR…ELPH, RLQE…PQSL, KYLK…RLPQ, ELLA…ITLP, and ICTN…QRLT. Residues 285-292 form a linker region; sequence SDGQQNTL. The tract at residues 293 to 574 is E3 ubiquitin-protein ligase catalytic domain; that stretch reads HRPLADAVTA…YRQLTDEVLA (282 aa). Positions 295–574 constitute an NEL domain; it reads PLADAVTAWF…YRQLTDEVLA (280 aa). Cys379 (glycyl thioester intermediate) is an active-site residue.

It belongs to the LRR-containing bacterial E3 ligase family. Post-translationally, ubiquitinated in the presence of host E1 ubiquitin-activating enzyme, E2 ubiquitin-conjugating enzyme and ubiquitin.

The protein localises to the secreted. The protein resides in the host cytoplasm. It catalyses the reaction S-ubiquitinyl-[E2 ubiquitin-conjugating enzyme]-L-cysteine + [acceptor protein]-L-lysine = [E2 ubiquitin-conjugating enzyme]-L-cysteine + N(6)-ubiquitinyl-[acceptor protein]-L-lysine.. Functionally, effector proteins function to alter host cell physiology and promote bacterial survival in host tissues. This protein is an E3 ubiquitin ligase that interferes with host's ubiquitination pathway. The polypeptide is Probable E3 ubiquitin-protein ligase ipaH4.5 (ipaH4.5) (Shigella flexneri).